A 574-amino-acid chain; its full sequence is Arginine--tRNA ligase (574 aa).

Positions 126 to 136 (PNIAKRMHVGH) match the 'HIGH' region motif.

The protein belongs to the class-I aminoacyl-tRNA synthetase family. As to quaternary structure, monomer.

The protein localises to the cytoplasm. It carries out the reaction tRNA(Arg) + L-arginine + ATP = L-arginyl-tRNA(Arg) + AMP + diphosphate. This Chloroflexus aurantiacus (strain ATCC 29366 / DSM 635 / J-10-fl) protein is Arginine--tRNA ligase.